Here is a 317-residue protein sequence, read N- to C-terminus: Ferrochelatase (317 aa).

Fe cation-binding residues include His184 and Glu259.

Belongs to the ferrochelatase family.

The protein resides in the cytoplasm. It carries out the reaction heme b + 2 H(+) = protoporphyrin IX + Fe(2+). It participates in porphyrin-containing compound metabolism; protoheme biosynthesis; protoheme from protoporphyrin-IX: step 1/1. Functionally, catalyzes the ferrous insertion into protoporphyrin IX. The sequence is that of Ferrochelatase from Chlamydia muridarum (strain MoPn / Nigg).